A 43-amino-acid polypeptide reads, in one-letter code: DeltaKappa-actitoxin-Avd4b (43 aa).

3 disulfide bridges follow: Cys4–Cys39, Cys6–Cys32, and Cys22–Cys40.

This sequence belongs to the sea anemone type 3 (BDS) potassium channel toxin family.

It is found in the secreted. The protein resides in the nematocyst. Its function is as follows. Acts as a gating modifier on both Kv and Nav ion channels. Voltage-dependently inhibits voltage-gated potassium channels Kv3 (Kv3.1/KCNC1, Kv3.2/KCNC2 and Kv3.4/KCNC4). Slows inactivation of the voltage-gated sodium channel Nav1.7/SCN9A. Inhibits all Kv3.1, Kv3.2 and Kv3.4 by about 50% when tested at a voltage of +40 mV. May act by binding residues in voltage-sensing domains S3b and S4 of Kv3. Tests have been done on human Nav1.7/SCN9A and rat SCG neurons that mostly carry Nav1.7 channels (EC(50)=300 nM). This toxin also reduces blood pressure. This Anemonia sulcata (Mediterranean snakelocks sea anemone) protein is DeltaKappa-actitoxin-Avd4b.